The chain runs to 182 residues: Ribosome maturation factor RimM (182 aa).

A PRC barrel domain is found at 103-182 (EDEFYWRELF…RIEVDWDPAF (80 aa)).

It belongs to the RimM family. Binds ribosomal protein uS19.

The protein localises to the cytoplasm. Functionally, an accessory protein needed during the final step in the assembly of 30S ribosomal subunit, possibly for assembly of the head region. Essential for efficient processing of 16S rRNA. May be needed both before and after RbfA during the maturation of 16S rRNA. It has affinity for free ribosomal 30S subunits but not for 70S ribosomes. This chain is Ribosome maturation factor RimM, found in Vibrio cholerae serotype O1 (strain ATCC 39315 / El Tor Inaba N16961).